The chain runs to 195 residues: Guanylate kinase (195 aa).

Residues 10–189 (GRLIVFSAPS…TVDAVATRIA (180 aa)) enclose the Guanylate kinase-like domain. ATP is bound at residue 17–24 (APSGTGKS).

It belongs to the guanylate kinase family.

It is found in the cytoplasm. It carries out the reaction GMP + ATP = GDP + ADP. Essential for recycling GMP and indirectly, cGMP. This chain is Guanylate kinase, found in Chlorobaculum tepidum (strain ATCC 49652 / DSM 12025 / NBRC 103806 / TLS) (Chlorobium tepidum).